Consider the following 347-residue polypeptide: Quinolinate synthase (347 aa).

Iminosuccinate is bound by residues H47 and S68. A [4Fe-4S] cluster-binding site is contributed by C113. Iminosuccinate contacts are provided by residues 139-141 and S156; that span reads YAN. Residue C200 coordinates [4Fe-4S] cluster. Residues 226–228 and T243 each bind iminosuccinate; that span reads HPE. C297 serves as a coordination point for [4Fe-4S] cluster.

This sequence belongs to the quinolinate synthase family. Type 1 subfamily. [4Fe-4S] cluster is required as a cofactor.

It localises to the cytoplasm. It catalyses the reaction iminosuccinate + dihydroxyacetone phosphate = quinolinate + phosphate + 2 H2O + H(+). It participates in cofactor biosynthesis; NAD(+) biosynthesis; quinolinate from iminoaspartate: step 1/1. Functionally, catalyzes the condensation of iminoaspartate with dihydroxyacetone phosphate to form quinolinate. The polypeptide is Quinolinate synthase (Salmonella paratyphi A (strain ATCC 9150 / SARB42)).